Consider the following 405-residue polypeptide: Probable tRNA sulfurtransferase (405 aa).

A THUMP domain is found at 60 to 165 (EPVNDRLKVV…QDGAYISNQL (106 aa)). ATP-binding positions include 183 to 184 (ML), 208 to 209 (HF), Arg-265, Gly-287, and Gln-296.

The protein belongs to the ThiI family.

The protein resides in the cytoplasm. It catalyses the reaction [ThiI sulfur-carrier protein]-S-sulfanyl-L-cysteine + a uridine in tRNA + 2 reduced [2Fe-2S]-[ferredoxin] + ATP + H(+) = [ThiI sulfur-carrier protein]-L-cysteine + a 4-thiouridine in tRNA + 2 oxidized [2Fe-2S]-[ferredoxin] + AMP + diphosphate. The catalysed reaction is [ThiS sulfur-carrier protein]-C-terminal Gly-Gly-AMP + S-sulfanyl-L-cysteinyl-[cysteine desulfurase] + AH2 = [ThiS sulfur-carrier protein]-C-terminal-Gly-aminoethanethioate + L-cysteinyl-[cysteine desulfurase] + A + AMP + 2 H(+). The protein operates within cofactor biosynthesis; thiamine diphosphate biosynthesis. Catalyzes the ATP-dependent transfer of a sulfur to tRNA to produce 4-thiouridine in position 8 of tRNAs, which functions as a near-UV photosensor. Also catalyzes the transfer of sulfur to the sulfur carrier protein ThiS, forming ThiS-thiocarboxylate. This is a step in the synthesis of thiazole, in the thiamine biosynthesis pathway. The sulfur is donated as persulfide by IscS. The protein is Probable tRNA sulfurtransferase of Lactobacillus delbrueckii subsp. bulgaricus (strain ATCC BAA-365 / Lb-18).